Here is a 362-residue protein sequence, read N- to C-terminus: Histidinol-phosphate aminotransferase (362 aa).

Residue lysine 218 is modified to N6-(pyridoxal phosphate)lysine.

This sequence belongs to the class-II pyridoxal-phosphate-dependent aminotransferase family. Histidinol-phosphate aminotransferase subfamily. In terms of assembly, homodimer. Requires pyridoxal 5'-phosphate as cofactor.

It catalyses the reaction L-histidinol phosphate + 2-oxoglutarate = 3-(imidazol-4-yl)-2-oxopropyl phosphate + L-glutamate. Its pathway is amino-acid biosynthesis; L-histidine biosynthesis; L-histidine from 5-phospho-alpha-D-ribose 1-diphosphate: step 7/9. The chain is Histidinol-phosphate aminotransferase from Xanthomonas campestris pv. campestris (strain B100).